The sequence spans 360 residues: DNA replication and repair protein RecF (360 aa).

ATP is bound at residue Gly30 to Thr37.

Belongs to the RecF family.

The protein resides in the cytoplasm. Its function is as follows. The RecF protein is involved in DNA metabolism; it is required for DNA replication and normal SOS inducibility. RecF binds preferentially to single-stranded, linear DNA. It also seems to bind ATP. This chain is DNA replication and repair protein RecF, found in Shewanella amazonensis (strain ATCC BAA-1098 / SB2B).